We begin with the raw amino-acid sequence, 93 residues long: Ribonuclease P protein component 4 (93 aa).

Zn(2+) is bound by residues C55, C58, C81, and C83.

Belongs to the eukaryotic/archaeal RNase P protein component 4 family. In terms of assembly, consists of a catalytic RNA component and at least 4-5 protein subunits. Requires Zn(2+) as cofactor.

It localises to the cytoplasm. The enzyme catalyses Endonucleolytic cleavage of RNA, removing 5'-extranucleotides from tRNA precursor.. Functionally, part of ribonuclease P, a protein complex that generates mature tRNA molecules by cleaving their 5'-ends. In Halobacterium salinarum (strain ATCC 29341 / DSM 671 / R1), this protein is Ribonuclease P protein component 4.